The chain runs to 158 residues: SsrA-binding protein (158 aa).

This sequence belongs to the SmpB family.

The protein localises to the cytoplasm. In terms of biological role, required for rescue of stalled ribosomes mediated by trans-translation. Binds to transfer-messenger RNA (tmRNA), required for stable association of tmRNA with ribosomes. tmRNA and SmpB together mimic tRNA shape, replacing the anticodon stem-loop with SmpB. tmRNA is encoded by the ssrA gene; the 2 termini fold to resemble tRNA(Ala) and it encodes a 'tag peptide', a short internal open reading frame. During trans-translation Ala-aminoacylated tmRNA acts like a tRNA, entering the A-site of stalled ribosomes, displacing the stalled mRNA. The ribosome then switches to translate the ORF on the tmRNA; the nascent peptide is terminated with the 'tag peptide' encoded by the tmRNA and targeted for degradation. The ribosome is freed to recommence translation, which seems to be the essential function of trans-translation. The sequence is that of SsrA-binding protein from Caldicellulosiruptor saccharolyticus (strain ATCC 43494 / DSM 8903 / Tp8T 6331).